We begin with the raw amino-acid sequence, 160 residues long: UPF0178 protein BPP1051 (160 aa).

It belongs to the UPF0178 family.

The protein is UPF0178 protein BPP1051 of Bordetella parapertussis (strain 12822 / ATCC BAA-587 / NCTC 13253).